The chain runs to 125 residues: MLGVIVACMQDMSSYMFGQWDTPLMVLIFFMVIDYLGDIVNAAVEKSLDFKKSYMGIAKIVSVLVVIIVSVLMDRLVNKGTWFFRTFTCYFYVANEGINILENCSKLGLPMPEKLMKTLEDLKNR.

The next 2 helical transmembrane spans lie at 22 to 44 and 54 to 73; these read TPLM…NAAV and YMGI…SVLM.

Belongs to the bacteriophage holin family. Cp-1 holin subfamily.

The protein resides in the cell membrane. This is an uncharacterized protein from Clostridium acetobutylicum (strain ATCC 824 / DSM 792 / JCM 1419 / IAM 19013 / LMG 5710 / NBRC 13948 / NRRL B-527 / VKM B-1787 / 2291 / W).